A 305-amino-acid chain; its full sequence is Acetylglutamate kinase (305 aa).

Residues 80-81 (GG), arginine 102, and asparagine 196 each bind substrate.

This sequence belongs to the acetylglutamate kinase family. ArgB subfamily.

The protein localises to the cytoplasm. The enzyme catalyses N-acetyl-L-glutamate + ATP = N-acetyl-L-glutamyl 5-phosphate + ADP. It functions in the pathway amino-acid biosynthesis; L-arginine biosynthesis; N(2)-acetyl-L-ornithine from L-glutamate: step 2/4. In terms of biological role, catalyzes the ATP-dependent phosphorylation of N-acetyl-L-glutamate. The polypeptide is Acetylglutamate kinase (Chlorobium luteolum (strain DSM 273 / BCRC 81028 / 2530) (Pelodictyon luteolum)).